Consider the following 276-residue polypeptide: Urease accessory protein UreD (276 aa).

Belongs to the UreD family. In terms of assembly, ureD, UreF and UreG form a complex that acts as a GTP-hydrolysis-dependent molecular chaperone, activating the urease apoprotein by helping to assemble the nickel containing metallocenter of UreC. The UreE protein probably delivers the nickel.

The protein localises to the cytoplasm. Required for maturation of urease via the functional incorporation of the urease nickel metallocenter. The polypeptide is Urease accessory protein UreD (Variovorax paradoxus (strain S110)).